Reading from the N-terminus, the 209-residue chain is Methylated-DNA--protein-cysteine methyltransferase (209 aa).

Zn(2+) is bound at residue Cys5. Ser14 bears the Phosphoserine mark. Zn(2+) is bound by residues Cys24, His29, and His89. Residues Thr99, Tyr118, Gln119, Asn127, and Arg132 each contribute to the DNA site. Cys149 serves as the catalytic Nucleophile; methyl group acceptor. Residue Ser155 coordinates DNA.

It belongs to the MGMT family. Zn(2+) is required as a cofactor.

It localises to the nucleus. It catalyses the reaction a 6-O-methyl-2'-deoxyguanosine in DNA + L-cysteinyl-[protein] = S-methyl-L-cysteinyl-[protein] + a 2'-deoxyguanosine in DNA. It carries out the reaction a 4-O-methyl-thymidine in DNA + L-cysteinyl-[protein] = a thymidine in DNA + S-methyl-L-cysteinyl-[protein]. Its function is as follows. Involved in the cellular defense against the biological effects of O6-methylguanine (O6-MeG) and O4-methylthymine (O4-MeT) in DNA. Repairs the methylated nucleobase in DNA by stoichiometrically transferring the methyl group to a cysteine residue in the enzyme. This is a suicide reaction: the enzyme is irreversibly inactivated. This is Methylated-DNA--protein-cysteine methyltransferase (Mgmt) from Rattus norvegicus (Rat).